Reading from the N-terminus, the 153-residue chain is MGKISSLPTQLFKCCFCDFLKVKMHIMSSSHLLYLALCLLTFTSSATAGPETLCGAELVDALQFVCGDRGFYFNKPTGYGSSSRRAPQTGIVDECCFRSCDLRRLEMYCAPLKPAKSARSVRAQRHTDMPKAQKEVHLKNASRGSAGNKNYRM.

The tract at residues 49-77 (GPETLCGAELVDALQFVCGDRGFYFNKPT) is b. 3 cysteine pairs are disulfide-bonded: Cys54–Cys96, Cys66–Cys109, and Cys95–Cys100. The segment at 78–89 (GYGSSSRRAPQT) is c. The tract at residues 90–110 (GIVDECCFRSCDLRRLEMYCA) is a. Positions 111-118 (PLKPAKSA) are d. A propeptide spans 119 to 153 (RSVRAQRHTDMPKAQKEVHLKNASRGSAGNKNYRM) (e peptide). The segment at 120–153 (SVRAQRHTDMPKAQKEVHLKNASRGSAGNKNYRM) is disordered. Over residues 125–138 (RHTDMPKAQKEVHL) the composition is skewed to basic and acidic residues. The span at 142–153 (SRGSAGNKNYRM) shows a compositional bias: polar residues.

This sequence belongs to the insulin family. Forms a ternary complex with IGFR1 and ITGAV:ITGB3. Forms a ternary complex with IGFR1 and ITGA6:ITGB4. Forms a ternary complex with IGFBP3 and ALS.

The protein resides in the secreted. In terms of biological role, the insulin-like growth factors, isolated from plasma, are structurally and functionally related to insulin but have a much higher growth-promoting activity. May be a physiological regulator of [1-14C]-2-deoxy-D-glucose (2DG) transport and glycogen synthesis in osteoblasts. Stimulates glucose transport in bone-derived osteoblastic (PyMS) cells and is effective at much lower concentrations than insulin, not only regarding glycogen and DNA synthesis but also with regard to enhancing glucose uptake. May play a role in synapse maturation. Ca(2+)-dependent exocytosis of IGF1 is required for sensory perception of smell in the olfactory bulb. Acts as a ligand for IGF1R. Binds to the alpha subunit of IGF1R, leading to the activation of the intrinsic tyrosine kinase activity which autophosphorylates tyrosine residues in the beta subunit thus initiating a cascade of down-stream signaling events leading to activation of the PI3K-AKT/PKB and the Ras-MAPK pathways. Binds to integrins ITGAV:ITGB3 and ITGA6:ITGB4. Its binding to integrins and subsequent ternary complex formation with integrins and IGFR1 are essential for IGF1 signaling. Induces the phosphorylation and activation of IGFR1, MAPK3/ERK1, MAPK1/ERK2 and AKT1. As part of the MAPK/ERK signaling pathway, acts as a negative regulator of apoptosis in cardiomyocytes via promotion of STUB1/CHIP-mediated ubiquitination and degradation of ICER-type isoforms of CREM. In Rhinopithecus roxellana (Golden snub-nosed monkey), this protein is Insulin-like growth factor 1.